Reading from the N-terminus, the 1392-residue chain is FERM and PDZ domain-containing protein 2 (1392 aa).

The KIND domain maps to 15 to 197; the sequence is VTLASALQVR…SEVERRVVEE (183 aa). The tract at residues 211–246 is disordered; that stretch reads SRLHQADGESPGAPASDALQPRRVSERSAETQSSLE. The 301-residue stretch at 342–642 folds into the FERM domain; it reads CVVLLNGRCL…WFNAQTGSKH (301 aa). One can recognise a PDZ 1 domain in the interval 775–861; the sequence is GLFGEPNQDI…MAVRMIQNSP (87 aa). The disordered stretch occupies residues 903–930; that stretch reads GRQSPHIHDQDRSVRGTEMAQGAGSCPP. Over residues 908–917 the composition is skewed to basic and acidic residues; it reads HIHDQDRSVR. An interaction with GRIN2A and GRIN2B region spans residues 937–1027; sequence TGEIYFVELV…VARLVLERRG (91 aa). 2 PDZ domains span residues 950-1035 and 1079-1167; these read GTLG…PQCP and RGLG…PEME. The interval 1186–1236 is disordered; the sequence is CAGSEQSPSLDQEDNWRDSTSLDAGEGLSPGPESSYKDVRQVKGDREKERP. Residues 1220–1236 are compositionally biased toward basic and acidic residues; it reads SYKDVRQVKGDREKERP.

As to quaternary structure, interacts (via the second PDZ domain) with CTNND2 (via the extreme C-terminus). Interacts (via the second PDZ domain) with PKP4 (via the extreme C-terminus); the interaction directs FRMPD2 to the basolateral membranes. Interacts (via the second PDZ domain) with ARVCF (via the extreme C-terminus). Interacts (via the second PDZ domain) with NMDAR subunits GRIN2A/GLUN2A and GRIN2B/GLUN2B (via the extreme C-terminus); the interaction is direct and is likely to promote NMDAR-mediated neural signal transmission. Binds GRIN2A with lower affinity than GRIN2B. Interacts (via the third PDZ domain) with LRIT1 (via the extreme C-terminus); the interaction leads to their colocalization in photoreceptor synapses. Interacts with NOD2; the interaction is likely to trigger NOD2-mediated nuclear factor kappaB activation.

It is found in the cytoplasm. The protein resides in the postsynaptic density. Its subcellular location is the basolateral cell membrane. It localises to the cell junction. The protein localises to the tight junction. In terms of biological role, functions as a scaffold protein and likely plays a role in N-methyl-D-aspartic acid receptor (NMDAR)-mediated synaptic excitatory transmission. May be involved in synapse formation in cone photoreceptor cells. May play a role in the regulation of tight junction formation. Binds phosphatidylinositol 3,4-bisphosphate (PtdIns(3,4)P2). May pNF-kappa-Blay a role in the regulation of NOD2-mediated NF-kappa-B activation in immune response. In Mus musculus (Mouse), this protein is FERM and PDZ domain-containing protein 2.